We begin with the raw amino-acid sequence, 541 residues long: Formimidoyltransferase-cyclodeaminase (541 aa).

Residues 1–181 form a formiminotransferase N-subdomain region; sequence MSQLVECVPN…GATVTGARKF (181 aa). His82 acts as the For formimidoyltransferase activity in catalysis. 163–172 is a folate binding site; sequence GPSSFVPSWG. The interval 182–326 is formiminotransferase C-subdomain; sequence LIAFNINLLS…PKERIIEYLV (145 aa). Residues 327 to 334 form a linker region; the sequence is PDSGPEQS. The cyclodeaminase/cyclohydrolase stretch occupies residues 335-541; that stretch reads LLDTSLRGFV…VLGSLEARKE (207 aa). Residue Asp412 is the For cyclodeaminase activity of the active site. Ser520 is modified (phosphoserine).

In the C-terminal section; belongs to the cyclodeaminase/cyclohydrolase family. It in the N-terminal section; belongs to the formiminotransferase family. Homooctamer, including four polyglutamate binding sites. The subunits are arranged as a tetramer of dimers, and form a planar ring-shaped structure.

Its subcellular location is the cytoplasm. It localises to the cytoskeleton. The protein localises to the microtubule organizing center. It is found in the centrosome. The protein resides in the centriole. Its subcellular location is the golgi apparatus. The enzyme catalyses 5-formimidoyltetrahydrofolate + L-glutamate = N-formimidoyl-L-glutamate + (6S)-5,6,7,8-tetrahydrofolate. The catalysed reaction is (6S)-5-formyl-5,6,7,8-tetrahydrofolate + L-glutamate = N-formyl-L-glutamate + (6S)-5,6,7,8-tetrahydrofolate + H(+). It carries out the reaction 5-formimidoyltetrahydrofolate + 2 H(+) = (6R)-5,10-methenyltetrahydrofolate + NH4(+). Its pathway is amino-acid degradation; L-histidine degradation into L-glutamate; L-glutamate from N-formimidoyl-L-glutamate (transferase route): step 1/1. It functions in the pathway one-carbon metabolism; tetrahydrofolate interconversion. Functionally, folate-dependent enzyme, that displays both transferase and deaminase activity. Serves to channel one-carbon units from formiminoglutamate to the folate pool. Its function is as follows. Binds and promotes bundling of vimentin filaments originating from the Golgi. The polypeptide is Formimidoyltransferase-cyclodeaminase (Ftcd) (Mus musculus (Mouse)).